A 255-amino-acid chain; its full sequence is Serine/threonine-protein phosphatase PP1 (255 aa).

4 residues coordinate Mn(2+): D2, H4, D30, and N62. H63 acts as the Proton donor in catalysis. H111 and H186 together coordinate Mn(2+).

It belongs to the PPP phosphatase family. PP-1 subfamily. It depends on Mn(2+) as a cofactor.

It carries out the reaction O-phospho-L-seryl-[protein] + H2O = L-seryl-[protein] + phosphate. The catalysed reaction is O-phospho-L-threonyl-[protein] + H2O = L-threonyl-[protein] + phosphate. The protein is Serine/threonine-protein phosphatase PP1 of Brassica napus (Rape).